The chain runs to 788 residues: MPSAQTAAERIAELRSEIDAHNYRYYVLDEPSVPDAEYDRLFNELKALEAEHPELVTPESPTQRVGGAALAAFGQVRHEVPMLSLGNAFEEQDLLDFDRRVREGLDLPAGDLFGDGAVVEYSCEPKLDGLAVSLLYENGHLVRGATRGDGSTGEDISANVRTVRNIPLKLHGSGWPAVLEVRGEIYMPKAGFEALNARQLESGGKPFANPRNAAAGSLRQLDSKITASRPLELCAYGVGRSDGELPDTHIGILQALKGWGLPISRELKLAKGVAECRAYYDAIGAKRDALPYEIDGVVFKVNAVEQQRELGFRAREPRWAIAHKFPAREEITELLDVEFQVGRTGAITPVARLKPVQVAGVTVSNATLHNMDEVARLGVMIGDTVIVRRAGDVIPQILGVIAERRPTDARAVHVPEQCPVCGSAVERTQLIKRSKGRESVSEGSIYRCVGRLACQAQLKQAIIHFVSRRAMDIDGLGDKIVEQLVDKGLVRSPADLYCLTHEQVIELEGFAEISTRNLLHAIDASRKPSLARFVYALGIPDVGEETAKLLARALGSLDRIGRALPDVLVYLPDVGLEVAHEIHSFFEDEHNRTVIALLRERGVEPQEQGDVHPEFAACATLPDLLDRLNIPHIARTGAQRLAERFGSLEAIIAADWLDLRQVERLTEKAARSLRDYFDKPENAERARLIEAQLREFGMHWESERKAAEGLPLAGQTWVLTGTLETMSRDEGKARLEALGAKVAGSVSAKTTCVVAGPGAGSKLTKANELGVTVLDESQFIERLAQLGS.

NAD(+)-binding positions include 35–39, 84–85, and Glu124; these read DAEYD and SL. Lys126 functions as the N6-AMP-lysine intermediate in the catalytic mechanism. NAD(+) is bound by residues Arg147, Glu184, Lys300, and Lys324. Residues Cys418, Cys421, Cys448, and Cys454 each coordinate Zn(2+). In terms of domain architecture, BRCT spans 707-788; that stretch reads AEGLPLAGQT…FIERLAQLGS (82 aa).

It belongs to the NAD-dependent DNA ligase family. LigA subfamily. The cofactor is Mg(2+). It depends on Mn(2+) as a cofactor.

The enzyme catalyses NAD(+) + (deoxyribonucleotide)n-3'-hydroxyl + 5'-phospho-(deoxyribonucleotide)m = (deoxyribonucleotide)n+m + AMP + beta-nicotinamide D-nucleotide.. DNA ligase that catalyzes the formation of phosphodiester linkages between 5'-phosphoryl and 3'-hydroxyl groups in double-stranded DNA using NAD as a coenzyme and as the energy source for the reaction. It is essential for DNA replication and repair of damaged DNA. This is DNA ligase from Stutzerimonas stutzeri (strain A1501) (Pseudomonas stutzeri).